The primary structure comprises 289 residues: RNA-binding protein CP29B, chloroplastic (289 aa).

Residues 1 to 62 (MAASASSLAL…NSPASRFARN (62 aa)) constitute a chloroplast transit peptide. 2 positions are modified to phosphoserine: Ser-6 and Ser-12. Val-63 carries the N-acetylvaline modification. In terms of domain architecture, RRM 1 spans 91-169 (LKLFVGNLPF…RPLRVNAGPP (79 aa)). The tract at residues 158 to 199 (DGRPLRVNAGPPPPKREDGFSRGPRSSFGSSGSGYGGGGGSG) is disordered. The segment at 170 to 203 (PPKREDGFSRGPRSSFGSSGSGYGGGGGSGAGSG) is linker (Gly-rich). Low complexity predominate over residues 178 to 187 (SRGPRSSFGS). Gly residues predominate over residues 188 to 199 (SGSGYGGGGGSG). Residues 204–282 (NRVYVGNLSW…RQIRVSEAEA (79 aa)) form the RRM 2 domain.

In terms of processing, ADP-ribosylated by the Pseudomonas syringae type III effector HopU1. ADP-ribosylation reduces the ability of the protein to bind RNA. Phosphorylated on tyrosine residues after treatment with abscisic acid (ABA). Phosphorylation may reduce the ability of the protein to bind RNA.

The protein resides in the plastid. Its subcellular location is the chloroplast. Could be involved in splicing and/or processing of chloroplast RNA's. The chain is RNA-binding protein CP29B, chloroplastic from Arabidopsis thaliana (Mouse-ear cress).